Consider the following 115-residue polypeptide: DNA-directed RNA polymerase II subunit RPB11-b2 (115 aa).

The protein belongs to the archaeal Rpo11/eukaryotic RPB11/RPC19 RNA polymerase subunit family. As to quaternary structure, component of the RNA polymerase II (Pol II) complex consisting of 12 subunits.

The protein resides in the nucleus. Functionally, DNA-dependent RNA polymerase catalyzes the transcription of DNA into RNA using the four ribonucleoside triphosphates as substrates. Component of RNA polymerase II which synthesizes mRNA precursors and many functional non-coding RNAs. Pol II is the central component of the basal RNA polymerase II transcription machinery. It is composed of mobile elements that move relative to each other. RPB11 is part of the core element with the central large cleft. In Homo sapiens (Human), this protein is DNA-directed RNA polymerase II subunit RPB11-b2 (POLR2J3).